Here is a 140-residue protein sequence, read N- to C-terminus: uncharacterized protein (140 aa).

This is an uncharacterized protein from Homo sapiens (Human).